A 442-amino-acid polypeptide reads, in one-letter code: uncharacterized protein (442 aa).

The ABC transporter domain occupies 1 to 238 (MKAEGLSGGY…QSIKAVYDTD (238 aa)). ATP is bound at residue 33-40 (GPNGSGKT).

Belongs to the ABC transporter superfamily. In terms of assembly, the complex is composed of two ATP-binding proteins (YvrA), two transmembrane proteins (YvrB) and a solute-binding protein (YvrC).

Its function is as follows. Probably part of an ABC transporter complex. Probably responsible for energy coupling to the transport system. This is an uncharacterized protein from Bacillus subtilis (strain 168).